The primary structure comprises 215 residues: Probable transaldolase (215 aa).

K83 functions as the Schiff-base intermediate with substrate in the catalytic mechanism.

Belongs to the transaldolase family. Type 3B subfamily.

It localises to the cytoplasm. It carries out the reaction D-sedoheptulose 7-phosphate + D-glyceraldehyde 3-phosphate = D-erythrose 4-phosphate + beta-D-fructose 6-phosphate. It functions in the pathway carbohydrate degradation; pentose phosphate pathway; D-glyceraldehyde 3-phosphate and beta-D-fructose 6-phosphate from D-ribose 5-phosphate and D-xylulose 5-phosphate (non-oxidative stage): step 2/3. In terms of biological role, transaldolase is important for the balance of metabolites in the pentose-phosphate pathway. The polypeptide is Probable transaldolase (tal) (Clostridium acetobutylicum (strain ATCC 824 / DSM 792 / JCM 1419 / IAM 19013 / LMG 5710 / NBRC 13948 / NRRL B-527 / VKM B-1787 / 2291 / W)).